We begin with the raw amino-acid sequence, 272 residues long: Orotidine 5'-phosphate decarboxylase (272 aa).

The active-site Proton donor is the lysine 92.

The protein belongs to the OMP decarboxylase family. Type 2 subfamily.

It catalyses the reaction orotidine 5'-phosphate + H(+) = UMP + CO2. Its pathway is pyrimidine metabolism; UMP biosynthesis via de novo pathway; UMP from orotate: step 2/2. The chain is Orotidine 5'-phosphate decarboxylase (pyrF) from Deinococcus radiodurans (strain ATCC 13939 / DSM 20539 / JCM 16871 / CCUG 27074 / LMG 4051 / NBRC 15346 / NCIMB 9279 / VKM B-1422 / R1).